The chain runs to 300 residues: UDP-3-O-acyl-N-acetylglucosamine deacetylase (300 aa).

Residues His-78, His-237, and Asp-241 each coordinate Zn(2+). Catalysis depends on His-264, which acts as the Proton donor.

Belongs to the LpxC family. Zn(2+) serves as cofactor.

It carries out the reaction a UDP-3-O-[(3R)-3-hydroxyacyl]-N-acetyl-alpha-D-glucosamine + H2O = a UDP-3-O-[(3R)-3-hydroxyacyl]-alpha-D-glucosamine + acetate. It participates in glycolipid biosynthesis; lipid IV(A) biosynthesis; lipid IV(A) from (3R)-3-hydroxytetradecanoyl-[acyl-carrier-protein] and UDP-N-acetyl-alpha-D-glucosamine: step 2/6. In terms of biological role, catalyzes the hydrolysis of UDP-3-O-myristoyl-N-acetylglucosamine to form UDP-3-O-myristoylglucosamine and acetate, the committed step in lipid A biosynthesis. The sequence is that of UDP-3-O-acyl-N-acetylglucosamine deacetylase from Acinetobacter baumannii (strain ATCC 17978 / DSM 105126 / CIP 53.77 / LMG 1025 / NCDC KC755 / 5377).